Here is a 324-residue protein sequence, read N- to C-terminus: Lactonase drp35 (324 aa).

10 residues coordinate Ca(2+): Glu47, Ser109, Gly111, Asp129, Thr132, Tyr134, Asp137, Asn184, Asp235, and Ser236. The active-site Proton donor is Asp235.

It belongs to the SMP-30/CGR1 family. It depends on Ca(2+) as a cofactor.

Its subcellular location is the cytoplasm. Its function is as follows. Exhibits lactonase activity. Acts in cells with perturbed membrane integrity and is possibly related to the membrane homeostasis. The chain is Lactonase drp35 (drp35) from Staphylococcus aureus (strain MRSA252).